Here is a 234-residue protein sequence, read N- to C-terminus: Ubiquitin thioesterase OTUB2 (234 aa).

The 192-residue stretch at T40–A231 folds into the OTU domain. D48 is an active-site residue. The Nucleophile role is filled by C51. Active-site residues include H205 and H224.

Belongs to the peptidase C65 family.

It catalyses the reaction Thiol-dependent hydrolysis of ester, thioester, amide, peptide and isopeptide bonds formed by the C-terminal Gly of ubiquitin (a 76-residue protein attached to proteins as an intracellular targeting signal).. Functionally, hydrolase that can remove conjugated ubiquitin from proteins in vitro and may therefore play an important regulatory role at the level of protein turnover by preventing degradation. Mediates deubiquitination of 'Lys-11'-,'Lys-48'- and 'Lys-63'-linked polyubiquitin chains, with a preference for 'Lys-63'-linked polyubiquitin chains. In Mus musculus (Mouse), this protein is Ubiquitin thioesterase OTUB2 (Otub2).